A 272-amino-acid chain; its full sequence is NADPH-dependent 7-cyano-7-deazaguanine reductase (272 aa).

82–84 (IES) contacts substrate. 84 to 85 (SK) is an NADPH binding site. The Thioimide intermediate role is filled by C178. The active-site Proton donor is the D185. Position 217–218 (217–218 (HE)) interacts with substrate. 246–247 (RG) contacts NADPH.

Belongs to the GTP cyclohydrolase I family. QueF type 2 subfamily. In terms of assembly, homodimer.

The protein localises to the cytoplasm. The catalysed reaction is 7-aminomethyl-7-carbaguanine + 2 NADP(+) = 7-cyano-7-deazaguanine + 2 NADPH + 3 H(+). It participates in tRNA modification; tRNA-queuosine biosynthesis. Functionally, catalyzes the NADPH-dependent reduction of 7-cyano-7-deazaguanine (preQ0) to 7-aminomethyl-7-deazaguanine (preQ1). The polypeptide is NADPH-dependent 7-cyano-7-deazaguanine reductase (Stenotrophomonas maltophilia (strain R551-3)).